The primary structure comprises 275 residues: NH(3)-dependent NAD(+) synthetase (275 aa).

50-57 (GISGGVDS) is an ATP binding site. A Mg(2+)-binding site is contributed by Asp-56. A deamido-NAD(+)-binding site is contributed by Arg-147. ATP is bound at residue Thr-167. A Mg(2+)-binding site is contributed by Glu-172. Deamido-NAD(+) contacts are provided by Lys-180 and Asp-187. 2 residues coordinate ATP: Lys-196 and Thr-218. 267–268 (HK) is a deamido-NAD(+) binding site.

This sequence belongs to the NAD synthetase family. Homodimer.

The catalysed reaction is deamido-NAD(+) + NH4(+) + ATP = AMP + diphosphate + NAD(+) + H(+). It functions in the pathway cofactor biosynthesis; NAD(+) biosynthesis; NAD(+) from deamido-NAD(+) (ammonia route): step 1/1. Its function is as follows. Catalyzes the ATP-dependent amidation of deamido-NAD to form NAD. Uses ammonia as a nitrogen source. The chain is NH(3)-dependent NAD(+) synthetase from Pseudomonas fluorescens (strain Pf0-1).